The chain runs to 538 residues: Xylosidase/arabinosidase 43B (538 aa).

Residue Glu-367 is the Proton donor of the active site.

Belongs to the glycosyl hydrolase 43 family.

The enzyme catalyses Hydrolysis of (1-&gt;4)-beta-D-xylans, to remove successive D-xylose residues from the non-reducing termini.. The catalysed reaction is Hydrolysis of terminal non-reducing alpha-L-arabinofuranoside residues in alpha-L-arabinosides.. Its activity is regulated as follows. Activity is inhibited by Ag(+), Li(+), Cu(2+), Cr(3+), Co(3+), Ni(2+), Mg(2+), Zn(2+), EDTA, SDS and beta-mercaptoethanol; but not by Mn(2+), Pb(2+), Ca(2+) and Fe(3+). In terms of biological role, bifunctional beta-xylosidase/alpha-L-arabinosidases with a low level of xylanase activity. Is most active on 4-nitrophenyl beta-D-xylopyranoside (pNPX) (defined as 100%), moderate on p-nitrophenyl-alpha-L-arabinofuranoside (pNPA) (56.6%), and weak on beechwood xylan (5.7%) and birchwood xylan (2.7%). Is able to attack xylooligosacchardies with degrees of polymerisation of 2-5, releasing the amounts of reducing sugars in the order of xylopentose &gt; xylotetraose &gt; xylotriose &gt; xylobiose, i.e. the rate of xylose released from xylooligosacchardies increased with the chain length. No activity was detected in the presence of carboxymethyl cellulose-sodium (CMC-Na), sugar beet arabinan, AZCL-arabinan (debranched), 4-nitrophenyl a-D - galactopyranoside, 2-nitrophenyl beta-D-galactopyranoside, and 4-nitrophenyl alpha-D-glucopyranoside. The chain is Xylosidase/arabinosidase 43B from Humicola insolens (Soft-rot fungus).